A 78-amino-acid chain; its full sequence is HssA/B-like protein 30 (78 aa).

Residues 1 to 32 (MTLFSSITSISKTNTSSKSSVNSLSGSSLSMG) form a disordered region.

This sequence belongs to the hssA/B family.

The sequence is that of HssA/B-like protein 30 (hssl30) from Dictyostelium discoideum (Social amoeba).